Here is a 469-residue protein sequence, read N- to C-terminus: Lipase A (469 aa).

A signal peptide spans 1–22; sequence MMFLTQLVSALFLFFLGPISYG. The segment covering 40 to 51 has biased composition (pro residues); sequence PSEDPFYQPPPG. A disordered region spans residues 40–59; the sequence is PSEDPFYQPPPGYEETEPGT. The N-linked (GlcNAc...) asparagine glycan is linked to Asn-111. Cys-129 and Cys-304 are disulfide-bonded. Catalysis depends on charge relay system residues Ser-217, Asp-361, and His-393. An intrachain disulfide couples Cys-377 to Cys-421.

This sequence belongs to the AB hydrolase superfamily. Lipase family. Class Lip subfamily. In terms of assembly, monomer.

Its subcellular location is the secreted. The catalysed reaction is a triacylglycerol + H2O = a diacylglycerol + a fatty acid + H(+). In terms of biological role, hydrolyzes triglycerides, with a preference for substrates with short-chain lengths (C4 to C8). The polypeptide is Lipase A (Arthroderma benhamiae (strain ATCC MYA-4681 / CBS 112371) (Trichophyton mentagrophytes)).